A 121-amino-acid chain; its full sequence is Nitrogenase-stabilizing/protective protein NifW (121 aa).

It belongs to the NifW family. Homotrimer; associates with NifD.

Its function is as follows. May protect the nitrogenase Fe-Mo protein from oxidative damage. The protein is Nitrogenase-stabilizing/protective protein NifW of Synechococcus sp. (strain JA-2-3B'a(2-13)) (Cyanobacteria bacterium Yellowstone B-Prime).